Here is a 226-residue protein sequence, read N- to C-terminus: Cytidylate kinase (226 aa).

10 to 18 is a binding site for ATP; that stretch reads GPASSGKST.

This sequence belongs to the cytidylate kinase family. Type 1 subfamily.

Its subcellular location is the cytoplasm. The catalysed reaction is CMP + ATP = CDP + ADP. The enzyme catalyses dCMP + ATP = dCDP + ADP. The sequence is that of Cytidylate kinase from Streptococcus pyogenes serotype M5 (strain Manfredo).